A 65-amino-acid chain; its full sequence is Gallinacin-1 alpha (65 aa).

Residues 1–19 (MRIVYLLLPFILLLAQGAA) form the signal peptide. Positions 20–25 (GSSQAL) are excised as a propeptide. 3 disulfide bridges follow: cysteine 31-cysteine 59, cysteine 38-cysteine 53, and cysteine 43-cysteine 60.

Belongs to the beta-defensin family.

It localises to the secreted. The protein resides in the cytoplasmic granule. Functionally, has bactericidal activity. Potent activity against E.coli ML-35, L.monocytogenes EGD and C.albicans. This chain is Gallinacin-1 alpha, found in Gallus gallus (Chicken).